We begin with the raw amino-acid sequence, 103 residues long: Phospholipase A2 large subunit (103 aa).

Positions 7, 9, and 11 each coordinate Ca(2+). Cystine bridges form between Cys-8–Cys-30, Cys-29–Cys-68, Cys-36–Cys-61, and Cys-59–Cys-96. Asn-16 carries an N-linked (GlcNAc...) asparagine glycan. His-33 is an active-site residue. A Ca(2+)-binding site is contributed by Asp-34.

The protein belongs to the phospholipase A2 family. Group III subfamily. Heterodimer composed of a large subunit and a small subunit; disulfide-linked. Ca(2+) is required as a cofactor. In terms of tissue distribution, expressed by the venom gland.

Its subcellular location is the secreted. The enzyme catalyses a 1,2-diacyl-sn-glycero-3-phosphocholine + H2O = a 1-acyl-sn-glycero-3-phosphocholine + a fatty acid + H(+). In terms of biological role, phospholipase toxin, which catalyzes the calcium-dependent hydrolysis of the 2-acyl groups in 3-sn-phosphoglycerides. Inhibits both skeletal (RYR1) and cardiac (RYR2) ryanodine receptors (calcium release channels). Probably blocks ryanodine receptors by generating a lipid product. This Chersonesometrus fulvipes (Indian black scorpion) protein is Phospholipase A2 large subunit.